Consider the following 171-residue polypeptide: RNA pyrophosphohydrolase (171 aa).

Residues 6–149 (GFRPNVGIIL…KREVYRRALK (144 aa)) form the Nudix hydrolase domain. A Nudix box motif is present at residues 39–60 (GGIKESESAEQALYRELQEEVG).

Belongs to the Nudix hydrolase family. RppH subfamily. It depends on a divalent metal cation as a cofactor.

Its function is as follows. Accelerates the degradation of transcripts by removing pyrophosphate from the 5'-end of triphosphorylated RNA, leading to a more labile monophosphorylated state that can stimulate subsequent ribonuclease cleavage. This chain is RNA pyrophosphohydrolase, found in Teredinibacter turnerae (strain ATCC 39867 / T7901).